Reading from the N-terminus, the 365-residue chain is UDP-N-acetylglucosamine--N-acetylmuramyl-(pentapeptide) pyrophosphoryl-undecaprenol N-acetylglucosamine transferase (365 aa).

Residues 19–21, Asn-131, Arg-170, Ser-201, Ile-255, 274–279, and Gln-300 contribute to the UDP-N-acetyl-alpha-D-glucosamine site; these read TGG and ALTVTE.

The protein belongs to the glycosyltransferase 28 family. MurG subfamily.

Its subcellular location is the cell inner membrane. The catalysed reaction is di-trans,octa-cis-undecaprenyl diphospho-N-acetyl-alpha-D-muramoyl-L-alanyl-D-glutamyl-meso-2,6-diaminopimeloyl-D-alanyl-D-alanine + UDP-N-acetyl-alpha-D-glucosamine = di-trans,octa-cis-undecaprenyl diphospho-[N-acetyl-alpha-D-glucosaminyl-(1-&gt;4)]-N-acetyl-alpha-D-muramoyl-L-alanyl-D-glutamyl-meso-2,6-diaminopimeloyl-D-alanyl-D-alanine + UDP + H(+). It participates in cell wall biogenesis; peptidoglycan biosynthesis. Functionally, cell wall formation. Catalyzes the transfer of a GlcNAc subunit on undecaprenyl-pyrophosphoryl-MurNAc-pentapeptide (lipid intermediate I) to form undecaprenyl-pyrophosphoryl-MurNAc-(pentapeptide)GlcNAc (lipid intermediate II). The chain is UDP-N-acetylglucosamine--N-acetylmuramyl-(pentapeptide) pyrophosphoryl-undecaprenol N-acetylglucosamine transferase from Acinetobacter baylyi (strain ATCC 33305 / BD413 / ADP1).